The primary structure comprises 938 residues: Isoleucine--tRNA ligase (938 aa).

Residues 58-68 carry the 'HIGH' region motif; that stretch reads PYANGSIHIGH. Lysine 183 is subject to N6-acetyllysine. Glutamate 561 is a binding site for L-isoleucyl-5'-AMP. A 'KMSKS' region motif is present at residues 602 to 606; that stretch reads KMSKS. Position 605 (lysine 605) interacts with ATP. Zn(2+) contacts are provided by cysteine 901, cysteine 904, cysteine 921, and cysteine 924.

This sequence belongs to the class-I aminoacyl-tRNA synthetase family. IleS type 1 subfamily. Monomer. Zn(2+) serves as cofactor.

The protein resides in the cytoplasm. The enzyme catalyses tRNA(Ile) + L-isoleucine + ATP = L-isoleucyl-tRNA(Ile) + AMP + diphosphate. Its function is as follows. Catalyzes the attachment of isoleucine to tRNA(Ile). As IleRS can inadvertently accommodate and process structurally similar amino acids such as valine, to avoid such errors it has two additional distinct tRNA(Ile)-dependent editing activities. One activity is designated as 'pretransfer' editing and involves the hydrolysis of activated Val-AMP. The other activity is designated 'posttransfer' editing and involves deacylation of mischarged Val-tRNA(Ile). This is Isoleucine--tRNA ligase from Escherichia coli (strain 55989 / EAEC).